A 226-amino-acid polypeptide reads, in one-letter code: Transcription repressor OFP12 (226 aa).

The span at 68 to 87 (SSTFTASTSTAANSSSSSAS) shows a compositional bias: low complexity. The disordered stretch occupies residues 68 to 104 (SSTFTASTSTAANSSSSSASYDDSDNYGFAPDDDSPP). Residues 152–217 (VKHYVQSPDP…IRAFADILVS (66 aa)) form the OVATE domain.

Interacts with KNAT1, KNAT2, KNAT3 and KNAT4. In terms of tissue distribution, expressed in roots, shoots, stems, flower buds and siliques.

The protein resides in the nucleus. In terms of biological role, transcriptional repressor that regulates multiple aspects of plant growth and development through the regulation of BEL1-LIKE (BLH) and KNOX TALE (KNAT) homeodomain transcription factors. This Arabidopsis thaliana (Mouse-ear cress) protein is Transcription repressor OFP12 (OFP12).